A 107-amino-acid chain; its full sequence is Phosphoribosyl-ATP pyrophosphatase (107 aa).

Belongs to the PRA-PH family.

The protein localises to the cytoplasm. It catalyses the reaction 1-(5-phospho-beta-D-ribosyl)-ATP + H2O = 1-(5-phospho-beta-D-ribosyl)-5'-AMP + diphosphate + H(+). The protein operates within amino-acid biosynthesis; L-histidine biosynthesis; L-histidine from 5-phospho-alpha-D-ribose 1-diphosphate: step 2/9. This is Phosphoribosyl-ATP pyrophosphatase from Bacillus thuringiensis (strain Al Hakam).